Reading from the N-terminus, the 79-residue chain is Conotoxin TsMSGL-2 (79 aa).

A signal peptide spans 1–24 (MSGLGIMVLTLLLLVFMATSHQDA). Residues 25–46 (GEKQATQRDAVNVRRRRSIAGR) constitute a propeptide that is removed on maturation. Intrachain disulfides connect Cys52–Cys64, Cys56–Cys73, and Cys63–Cys77. Leu78 carries the leucine amide modification.

The protein belongs to the conotoxin O3 superfamily. Expressed by the venom duct.

Its subcellular location is the secreted. This chain is Conotoxin TsMSGL-2, found in Conus tessulatus (Tessellate cone).